The following is a 178-amino-acid chain: Caveolin-1 (178 aa).

S2 is modified (N-acetylserine). The residue at position 2 (S2) is a Phosphoserine. A required for homooligomerization region spans residues 2–94 (SGGKYVDSEG…WKASFTTFTV (93 aa)). Topologically, residues 2–104 (SGGKYVDSEG…TKYWFYRLLS (103 aa)) are cytoplasmic. Position 5 is an N6-acetyllysine; alternate (K5). K5 participates in a covalent cross-link: Glycyl lysine isopeptide (Lys-Gly) (interchain with G-Cter in ubiquitin); alternate. Y6 carries the phosphotyrosine modification. S9 is subject to Phosphoserine. Phosphotyrosine; by ABL1 is present on Y14. At Y25 the chain carries Phosphotyrosine. Residues K26 and K30 each participate in a glycyl lysine isopeptide (Lys-Gly) (interchain with G-Cter in ubiquitin) cross-link. The residue at position 37 (S37) is a Phosphoserine. Glycyl lysine isopeptide (Lys-Gly) (interchain with G-Cter in ubiquitin) cross-links involve residues K39, K47, and K57. Residues 82-94 (DGIWKASFTTFTV) form an interaction with CAVIN3 region. Positions 105 to 125 (ALFGIPMALIWGIYFAILSFL) form an intramembrane region, helical. At 126–178 (HIWAVVPCIKSFLIEIQCISRVYSIYVHTVCDPLFEAVGKIFSNVRINLQKEI) the chain is on the cytoplasmic side. Residues 131-142 (VPCIKSFLIEIQ) are interacts with SPRY1, SPRY2, SPRY3 and SPRY4. S-palmitoyl cysteine attachment occurs at residues C133, C143, and C156. Positions 149-160 (SIYVHTVCDPLF) are interacts with SPRY1, SPRY2, and SPRY4. An interacts with SPRY1, SPRY2, SPRY3 and SPRY4 region spans residues 167–178 (FSNVRINLQKEI).

Belongs to the caveolin family. Homooligomer. Interacts (via the N-terminus) with DPP4; the interaction is direct. Forms a stable heterooligomeric complex with CAV2 that targets to lipid rafts and drives caveolae formation. Interacts with PACSIN2; this interaction induces membrane tubulation. Interacts with BMX, BTK, CTNNB1, CDH1, GLIPR2, JUP, NOSTRIN, SNAP25 and STX1A. Interacts with SLC7A9. Interacts with TGFBR1. Interacts with CAVIN3 (via leucine-zipper domain) in a cholesterol-sensitive manner. Interacts with CAVIN1. Interacts with EHD2 in a cholesterol-dependent manner. Forms a ternary complex with UBXN6 and VCP; mediates CAV1 targeting to lysosomes for degradation. Interacts with ABCG1; this interaction regulates ABCG1-mediated cholesterol efflux. Interacts with NEU3; this interaction enhances NEU3 sialidase activity within caveola. Interacts (via C-terminus) with SPRY1, SPRY2 (via C-terminus), SPRY3, and SPRY4. Interacts with IGFBP5; this interaction allows trafficking of IGFBP5 from the plasma membrane to the nucleus. In terms of processing, phosphorylated at Tyr-14 by ABL1 in response to oxidative stress. Ubiquitinated. Undergo monoubiquitination and multi- and/or polyubiquitination. Monoubiquitination of N-terminal lysines promotes integration in a ternary complex with UBXN6 and VCP which promotes oligomeric CAV1 targeting to lysosomes for degradation. Ubiquitinated by ZNRF1; leading to degradation and modulation of the TLR4-mediated immune response.

It localises to the golgi apparatus membrane. The protein resides in the cell membrane. The protein localises to the membrane. It is found in the caveola. Its subcellular location is the membrane raft. Its function is as follows. May act as a scaffolding protein within caveolar membranes. Forms a stable heterooligomeric complex with CAV2 that targets to lipid rafts and drives caveolae formation. Mediates the recruitment of CAVIN proteins (CAVIN1/2/3/4) to the caveolae. Interacts directly with G-protein alpha subunits and can functionally regulate their activity. Involved in the costimulatory signal essential for T-cell receptor (TCR)-mediated T-cell activation. Its binding to DPP4 induces T-cell proliferation and NF-kappa-B activation in a T-cell receptor/CD3-dependent manner. Recruits CTNNB1 to caveolar membranes and may regulate CTNNB1-mediated signaling through the Wnt pathway. Negatively regulates TGFB1-mediated activation of SMAD2/3 by mediating the internalization of TGFBR1 from membrane rafts leading to its subsequent degradation. Binds 20(S)-hydroxycholesterol (20(S)-OHC). In Chlorocebus aethiops (Green monkey), this protein is Caveolin-1 (CAV1).